Here is a 237-residue protein sequence, read N- to C-terminus: UPF0502 protein HEAR1280 (237 aa).

Residues 1-13 (MNTEVMHSTSTES) show a composition bias toward polar residues. The segment at 1–21 (MNTEVMHSTSTESDAQEKPQA) is disordered.

The protein belongs to the UPF0502 family.

The polypeptide is UPF0502 protein HEAR1280 (Herminiimonas arsenicoxydans).